Reading from the N-terminus, the 193-residue chain is Peptidyl-tRNA hydrolase (193 aa).

H17 contributes to the tRNA binding site. H22 serves as the catalytic Proton acceptor. The tRNA site is built by F68, N70, and N116.

It belongs to the PTH family. As to quaternary structure, monomer.

It localises to the cytoplasm. It catalyses the reaction an N-acyl-L-alpha-aminoacyl-tRNA + H2O = an N-acyl-L-amino acid + a tRNA + H(+). Hydrolyzes ribosome-free peptidyl-tRNAs (with 1 or more amino acids incorporated), which drop off the ribosome during protein synthesis, or as a result of ribosome stalling. In terms of biological role, catalyzes the release of premature peptidyl moieties from peptidyl-tRNA molecules trapped in stalled 50S ribosomal subunits, and thus maintains levels of free tRNAs and 50S ribosomes. The polypeptide is Peptidyl-tRNA hydrolase (Xanthomonas axonopodis pv. citri (strain 306)).